A 433-amino-acid chain; its full sequence is MSENHEYLSQGGDWAQIVDEAAERGDETVVVNFGPSHPSTHGVMRLIIELDGESVSDLRVGIGFLHTGIEKNMEFRTWTQGVTFMTRCNYVANFFNELVYCLAVEKLLGITDDVPERARVLRVMITELNRISSHLIAVGTGGLELGASSVAEVGLREREIILEFNQAVTGLRMNNAWIRPGGVATDLPETGLDQLRDLIKRMEKYLPEIGQFCNENPIFKARTQGIGYADLSTCMALGVTGPALRATGLPWDLRKTQPYCDYDTYDFDVATWDTCDCYGRFRIRLEEMDQSVRILKQCLKRLEDTQGDRHMVEDPHIAWPAELALGPDGQGNSNEHIRHIMGESMEALIHHFKIVTEGFRVPAGQVYQAIEGAGGELGCHLVSDGGVRPYRSHLRDPGFVNVQSLPAMCEGGMLSDVVPSLASLDPVMGGVDR.

It belongs to the complex I 49 kDa subunit family. In terms of assembly, NDH-1 is composed of 14 different subunits. Subunits NuoB, C, D, E, F, and G constitute the peripheral sector of the complex.

The protein resides in the cell membrane. The catalysed reaction is a quinone + NADH + 5 H(+)(in) = a quinol + NAD(+) + 4 H(+)(out). NDH-1 shuttles electrons from NADH, via FMN and iron-sulfur (Fe-S) centers, to quinones in the respiratory chain. The immediate electron acceptor for the enzyme in this species is believed to be a menaquinone. Couples the redox reaction to proton translocation (for every two electrons transferred, four hydrogen ions are translocated across the cytoplasmic membrane), and thus conserves the redox energy in a proton gradient. In Cutibacterium acnes (strain DSM 16379 / KPA171202) (Propionibacterium acnes), this protein is NADH-quinone oxidoreductase subunit D.